The sequence spans 78 residues: Small ribosomal subunit protein bS16 (78 aa).

Belongs to the bacterial ribosomal protein bS16 family.

This chain is Small ribosomal subunit protein bS16, found in Maridesulfovibrio salexigens (strain ATCC 14822 / DSM 2638 / NCIMB 8403 / VKM B-1763) (Desulfovibrio salexigens).